The following is a 195-amino-acid chain: Cysteine/O-acetylserine efflux protein (195 aa).

The Periplasmic portion of the chain corresponds to 1-7; that stretch reads MTPTLLS. The helical transmembrane segment at 8-28 threads the bilayer; sequence AFWTYTLITAMTPGPNNILAL. Residues 29 to 46 lie on the Cytoplasmic side of the membrane; the sequence is SSATTHGFHQSTRVLAGM. A helical membrane pass occupies residues 47–67; the sequence is SLGFLIVMLLCAGISFSLAVI. Topologically, residues 68-69 are periplasmic; the sequence is DP. The helical transmembrane segment at 70–90 threads the bilayer; it reads AAVHLLSWAGAAYIVWLAWKI. Residues 91 to 104 lie on the Cytoplasmic side of the membrane; the sequence is ATSPTKEDGLQTKP. A helical transmembrane segment spans residues 105 to 125; that stretch reads ISFWASFALQFVNVKIILYGV. The Periplasmic portion of the chain corresponds to 126–141; the sequence is TALSTFVLPQTQALSW. A helical transmembrane segment spans residues 142-162; sequence IVGVSVLLAMIGTFGNVCWAL. Topologically, residues 163 to 176 are cytoplasmic; the sequence is AGHLFQRLFRQYGR. A helical transmembrane segment spans residues 177 to 194; it reads QLNIVLALLLIYCAVRIF. Residue Tyr-195 is a topological domain, periplasmic.

The protein belongs to the Rht family.

It localises to the cell inner membrane. The catalysed reaction is O-acetyl-L-serine(in) = O-acetyl-L-serine(out). It carries out the reaction L-cysteine(in) = L-cysteine(out). Functionally, exporter of O-acetylserine (OAS) and cysteine. This chain is Cysteine/O-acetylserine efflux protein (eamB), found in Escherichia coli O157:H7.